We begin with the raw amino-acid sequence, 124 residues long: Putative iron-sulfur cluster insertion protein ErpA (124 aa).

Iron-sulfur cluster is bound by residues Cys52, Cys116, and Cys118.

The protein belongs to the HesB/IscA family. As to quaternary structure, homodimer. Iron-sulfur cluster is required as a cofactor.

Functionally, required for insertion of 4Fe-4S clusters. This chain is Putative iron-sulfur cluster insertion protein ErpA, found in Delftia acidovorans (strain DSM 14801 / SPH-1).